The chain runs to 232 residues: 5'-methylthioadenosine/S-adenosylhomocysteine nucleosidase (232 aa).

Glu12 functions as the Proton acceptor in the catalytic mechanism. Residues Gly78, Met153, and 174-175 (ME) each bind substrate. Asp198 acts as the Proton donor in catalysis.

Belongs to the PNP/UDP phosphorylase family. MtnN subfamily.

It catalyses the reaction S-adenosyl-L-homocysteine + H2O = S-(5-deoxy-D-ribos-5-yl)-L-homocysteine + adenine. The enzyme catalyses S-methyl-5'-thioadenosine + H2O = 5-(methylsulfanyl)-D-ribose + adenine. It carries out the reaction 5'-deoxyadenosine + H2O = 5-deoxy-D-ribose + adenine. It functions in the pathway amino-acid biosynthesis; L-methionine biosynthesis via salvage pathway; S-methyl-5-thio-alpha-D-ribose 1-phosphate from S-methyl-5'-thioadenosine (hydrolase route): step 1/2. Its function is as follows. Catalyzes the irreversible cleavage of the glycosidic bond in both 5'-methylthioadenosine (MTA) and S-adenosylhomocysteine (SAH/AdoHcy) to adenine and the corresponding thioribose, 5'-methylthioribose and S-ribosylhomocysteine, respectively. Also cleaves 5'-deoxyadenosine, a toxic by-product of radical S-adenosylmethionine (SAM) enzymes, into 5-deoxyribose and adenine. The polypeptide is 5'-methylthioadenosine/S-adenosylhomocysteine nucleosidase (Geobacillus sp. (strain WCH70)).